A 520-amino-acid chain; its full sequence is Cytochrome P450 monooxygenase 176 (520 aa).

N-linked (GlcNAc...) asparagine glycosylation occurs at asparagine 6. Residues 10 to 27 traverse the membrane as a helical segment; sequence LLVVAGALFLTFLTTRFI. Residues asparagine 141 and asparagine 270 are each glycosylated (N-linked (GlcNAc...) asparagine). Cysteine 445 is a heme binding site. N-linked (GlcNAc...) asparagine glycosylation occurs at asparagine 517.

The protein belongs to the cytochrome P450 family. Heme is required as a cofactor.

It is found in the membrane. The protein operates within secondary metabolite biosynthesis. In terms of biological role, cytochrome P450 monooxygenase that is able to use delta(6)-protoilludene as a substrate to produce delta(6)-protoilludene-5-ol and an unidentified hydroxyprotoilludene. Is also able to use phenanthrene as a substrate for oxidation. The sequence is that of Cytochrome P450 monooxygenase 176 from Postia placenta (strain ATCC 44394 / Madison 698-R) (Brown rot fungus).